The sequence spans 143 residues: Deoxyuridine 5'-triphosphate nucleotidohydrolase (143 aa).

Residues 63–65 (RSG), asparagine 76, 80–82 (TID), and lysine 90 contribute to the substrate site.

It belongs to the dUTPase family. It depends on Mg(2+) as a cofactor.

The catalysed reaction is dUTP + H2O = dUMP + diphosphate + H(+). Its pathway is pyrimidine metabolism; dUMP biosynthesis; dUMP from dCTP (dUTP route): step 2/2. Functionally, this enzyme is involved in nucleotide metabolism: it produces dUMP, the immediate precursor of thymidine nucleotides and it decreases the intracellular concentration of dUTP so that uracil cannot be incorporated into DNA. The protein is Deoxyuridine 5'-triphosphate nucleotidohydrolase of Finegoldia magna (strain ATCC 29328 / DSM 20472 / WAL 2508) (Peptostreptococcus magnus).